The sequence spans 329 residues: Porphobilinogen deaminase (329 aa).

Cys-250 is subject to S-(dipyrrolylmethanemethyl)cysteine.

The protein belongs to the HMBS family. Monomer. The cofactor is dipyrromethane.

It catalyses the reaction 4 porphobilinogen + H2O = hydroxymethylbilane + 4 NH4(+). Its pathway is porphyrin-containing compound metabolism; protoporphyrin-IX biosynthesis; coproporphyrinogen-III from 5-aminolevulinate: step 2/4. Functionally, tetrapolymerization of the monopyrrole PBG into the hydroxymethylbilane pre-uroporphyrinogen in several discrete steps. This Burkholderia thailandensis (strain ATCC 700388 / DSM 13276 / CCUG 48851 / CIP 106301 / E264) protein is Porphobilinogen deaminase.